The primary structure comprises 902 residues: Zinc finger CCCH-type antiviral protein 1 (902 aa).

Alanine 2 is modified (N-acetylalanine). Positions alanine 2–phenylalanine 254 are N-terminal domain. The Nuclear localization signal signature appears at arginine 69 to lysine 76. 4 consecutive C3H1-type zinc fingers follow at residues cysteine 73–histidine 86, cysteine 88–histidine 110, cysteine 150–histidine 172, and serine 169–leucine 193. The tract at residues serine 221 to aspartate 251 is disordered. Residues methionine 224 to phenylalanine 254 are binding to EXOSC5. Residues serine 235 to serine 247 are compositionally biased toward basic residues. Phosphoserine; by GSK3-beta is present on residues serine 257, serine 263, serine 267, and serine 271. Residues serine 265 to glutamine 278 are compositionally biased toward polar residues. 2 disordered regions span residues serine 265 to aspartate 287 and tyrosine 299 to arginine 373. Phosphothreonine is present on threonine 273. Residues serine 275 and serine 284 each carry the phosphoserine modification. Positions leucine 285–aspartate 292 match the Nuclear export signal motif. Phosphoserine occurs at positions 302, 327, 335, 355, 378, and 387. Polar residues-rich tracts occupy residues serine 310–glutamine 336 and proline 344–glutamine 369. At threonine 393 the chain carries Phosphothreonine. 4 positions are modified to phosphoserine: serine 407, serine 469, serine 492, and serine 494. Positions leucine 445–aspartate 481 are disordered. Threonine 554 is subject to Phosphothreonine. Tyrosine 572 and serine 590 each carry phosphoserine. A WWE domain is found at serine 594 to arginine 681. Residues proline 716–serine 902 form the PARP catalytic domain.

This sequence belongs to the ARTD/PARP family. As to quaternary structure, homodimer or homooligomer. Homooligomerization is essential for its antiviral activity. Interacts with EXOSC5. Interacts (via N-terminal domain) with DDX17 in an RNA-independent manner. Interacts with EXOSC3, EXOSC7, DCP2 and DCP1A. Interacts with PARN in an RNA-independent manner. Interacts with XRN1 in an RNA-dependent manner. Isoform 2 interacts (via zinc-fingers) with RIGI in an RNA-dependent manner. Interacts (via N-terminal domain) with DHX30 (via N-terminus) in an RNA-independent manner. Phosphorylation at Ser-275 is essential for sequential phosphorylation of Ser-271, Ser-267, Ser-263 and Ser-257 by GSK3-beta. Phosphorylation by GSK3-beta enhances its antiviral activity.

It localises to the cytoplasm. The protein resides in the nucleus. In terms of biological role, antiviral protein which inhibits the replication of viruses by recruiting the cellular RNA degradation machineries to degrade the viral mRNAs. Binds to a ZAP-responsive element (ZRE) present in the target viral mRNA, recruits cellular poly(A)-specific ribonuclease PARN to remove the poly(A) tail, and the 3'-5' exoribonuclease complex exosome to degrade the RNA body from the 3'-end. It also recruits the decapping complex DCP1-DCP2 through RNA helicase p72 (DDX17) to remove the cap structure of the viral mRNA to initiate its degradation from the 5'-end. Its target viruses belong to families which include retroviridae: human immunodeficiency virus type 1 (HIV-1), moloney and murine leukemia virus (MoMLV) and xenotropic MuLV-related virus (XMRV), filoviridae: ebola virus (EBOV) and marburg virus (MARV), togaviridae: sindbis virus (SINV) and Ross river virus (RRV). Specifically targets the multiply spliced but not unspliced or singly spliced HIV-1 mRNAs for degradation. Isoform 1 is a more potent viral inhibitor than isoform 2. Isoform 2 acts as a positive regulator of RIGI signaling resulting in activation of the downstream effector IRF3 leading to the expression of type I IFNs and IFN stimulated genes (ISGs). This is Zinc finger CCCH-type antiviral protein 1 from Homo sapiens (Human).